Reading from the N-terminus, the 416-residue chain is S-adenosylmethionine synthase (416 aa).

His14 is an ATP binding site. Position 16 (Asp16) interacts with Mg(2+). Glu42 is a K(+) binding site. The L-methionine site is built by Glu55 and Gln98. Residues 98–108 (QSPDIARGVDT) are flexible loop. ATP-binding positions include 173–175 (DGK), 249–250 (KF), Asp258, 264–265 (RK), Ala281, and Lys285. Position 258 (Asp258) interacts with L-methionine. Lys289 serves as a coordination point for L-methionine.

This sequence belongs to the AdoMet synthase family. In terms of assembly, homotetramer; dimer of dimers. Mg(2+) is required as a cofactor. K(+) serves as cofactor.

It is found in the cytoplasm. It carries out the reaction L-methionine + ATP + H2O = S-adenosyl-L-methionine + phosphate + diphosphate. The protein operates within amino-acid biosynthesis; S-adenosyl-L-methionine biosynthesis; S-adenosyl-L-methionine from L-methionine: step 1/1. Catalyzes the formation of S-adenosylmethionine (AdoMet) from methionine and ATP. The overall synthetic reaction is composed of two sequential steps, AdoMet formation and the subsequent tripolyphosphate hydrolysis which occurs prior to release of AdoMet from the enzyme. The protein is S-adenosylmethionine synthase of Thermosynechococcus vestitus (strain NIES-2133 / IAM M-273 / BP-1).